Consider the following 227-residue polypeptide: Prolactin (227 aa).

The N-terminal stretch at methionine 1 to proline 28 is a signal peptide. A disulfide bridge links cysteine 32 with cysteine 39. Serine 54 carries the phosphoserine modification. Residue asparagine 59 is glycosylated (N-linked (GlcNAc...) asparagine; partial). A phosphoserine mark is found at serine 62, serine 118, serine 163, and serine 194. Intrachain disulfides connect cysteine 86–cysteine 202 and cysteine 219–cysteine 227.

The protein belongs to the somatotropin/prolactin family. In terms of assembly, interacts with PRLR.

The protein localises to the secreted. Prolactin acts primarily on the mammary gland by promoting lactation. This is Prolactin (PRL) from Homo sapiens (Human).